The following is a 168-amino-acid chain: Large ribosomal subunit protein uL24 (168 aa).

The segment at 112–168 (LEGKDPRKQPKEAPKAAEKPAKEEPKKETPKAEEKPAKEEPKETKVEKKSEEKEDEN) is disordered.

The protein belongs to the universal ribosomal protein uL24 family. As to quaternary structure, part of the 50S ribosomal subunit.

One of two assembly initiator proteins, it binds directly to the 5'-end of the 23S rRNA, where it nucleates assembly of the 50S subunit. Its function is as follows. Located at the polypeptide exit tunnel on the outside of the subunit. In Nitrosopumilus maritimus (strain SCM1), this protein is Large ribosomal subunit protein uL24.